The primary structure comprises 175 residues: General odorant-binding protein 84a (175 aa).

A signal peptide spans methionine 1–alanine 24. 2 cysteine pairs are disulfide-bonded: cysteine 103–cysteine 151 and cysteine 140–cysteine 160.

In terms of tissue distribution, present only in a small number of hairs scattered over the surface of the funiculus.

The protein localises to the secreted. The chain is General odorant-binding protein 84a (Obp84a) from Drosophila melanogaster (Fruit fly).